The primary structure comprises 325 residues: Glutarate 2-hydroxylase (325 aa).

The Fe cation site is built by His160, Asp162, and His292.

It belongs to the glutarate hydroxylase family. As to quaternary structure, homotetramer. Requires Fe(2+) as cofactor.

It catalyses the reaction glutarate + 2-oxoglutarate + O2 = (S)-2-hydroxyglutarate + succinate + CO2. The protein operates within amino-acid degradation. Its function is as follows. Acts as an alpha-ketoglutarate-dependent dioxygenase catalyzing hydroxylation of glutarate (GA) to L-2-hydroxyglutarate (L2HG). Functions in a L-lysine degradation pathway that proceeds via cadaverine, glutarate and L-2-hydroxyglutarate. This is Glutarate 2-hydroxylase from Escherichia coli O17:K52:H18 (strain UMN026 / ExPEC).